The following is a 394-amino-acid chain: Choline/ethanolamine kinase (394 aa).

The disordered stretch occupies residues 1 to 42; the sequence is MAADGTGVVGGGAVGGGLPKDGLQDAKCPEPIPNRRRASSLS. The residue at position 2 (A2) is an N-acetylalanine. Residues 7–19 show a composition bias toward gly residues; the sequence is GVVGGGAVGGGLP. Residues 75–81, R104, 146–152, Q244, and D264 contribute to the ATP site; these read SGGLSNL and QYLPSRP. Residue 77 to 79 coordinates substrate; sequence GLS.

The protein belongs to the choline/ethanolamine kinase family. As to quaternary structure, homodimer, and heterodimer with CHKA. In terms of tissue distribution, expressed ubiquitously with the highest level in testis.

It carries out the reaction choline + ATP = phosphocholine + ADP + H(+). The catalysed reaction is ethanolamine + ATP = phosphoethanolamine + ADP + H(+). It functions in the pathway phospholipid metabolism; phosphatidylethanolamine biosynthesis; phosphatidylethanolamine from ethanolamine: step 1/3. Has a key role in phospholipid metabolism, and catalyzes the first step of phosphatidylethanolamine and phosphatidylcholine biosynthesis. The polypeptide is Choline/ethanolamine kinase (Chkb) (Mus musculus (Mouse)).